Reading from the N-terminus, the 230-residue chain is tRNA (guanine-N(1)-)-methyltransferase (230 aa).

Residues Gly-114 and 138–143 (IGDYVL) contribute to the S-adenosyl-L-methionine site.

The protein belongs to the RNA methyltransferase TrmD family. In terms of assembly, homodimer.

The protein resides in the cytoplasm. The catalysed reaction is guanosine(37) in tRNA + S-adenosyl-L-methionine = N(1)-methylguanosine(37) in tRNA + S-adenosyl-L-homocysteine + H(+). Functionally, specifically methylates guanosine-37 in various tRNAs. The polypeptide is tRNA (guanine-N(1)-)-methyltransferase (Rhodococcus jostii (strain RHA1)).